We begin with the raw amino-acid sequence, 466 residues long: FBD-associated F-box protein At5g22730 (466 aa).

The region spanning 27–80 (EDLISKLPDSLITQILLYLPIKDIVRTSSLSSRWKSLWLLIPRLDLDSEEFQDY) is the F-box domain. The FBD domain occupies 385–436 (DEPIIFSSVPRCLVSSLESVEIKKFNGRPAKMEVARYFLENSGVLQKLVLHL).

The protein is FBD-associated F-box protein At5g22730 of Arabidopsis thaliana (Mouse-ear cress).